Consider the following 139-residue polypeptide: D-ribose pyranase (139 aa).

Histidine 20 functions as the Proton donor in the catalytic mechanism. Substrate is bound by residues aspartate 28, histidine 106, and 128–130; that span reads YAN.

It belongs to the RbsD / FucU family. RbsD subfamily. As to quaternary structure, homodecamer.

Its subcellular location is the cytoplasm. The enzyme catalyses beta-D-ribopyranose = beta-D-ribofuranose. It participates in carbohydrate metabolism; D-ribose degradation; D-ribose 5-phosphate from beta-D-ribopyranose: step 1/2. In terms of biological role, catalyzes the interconversion of beta-pyran and beta-furan forms of D-ribose. This chain is D-ribose pyranase, found in Pectobacterium atrosepticum (strain SCRI 1043 / ATCC BAA-672) (Erwinia carotovora subsp. atroseptica).